We begin with the raw amino-acid sequence, 253 residues long: Large ribosomal subunit protein uL2C (253 aa).

It belongs to the universal ribosomal protein uL2 family. Component of the large ribosomal subunit (LSU). Mature yeast ribosomes consist of a small (40S) and a large (60S) subunit. The 40S small subunit contains 1 molecule of ribosomal RNA (18S rRNA) and at least 33 different proteins. The large 60S subunit contains 3 rRNA molecules (25S, 5.8S and 5S rRNA) and at least 46 different proteins.

It is found in the cytoplasm. It localises to the nucleus. In terms of biological role, component of the ribosome, a large ribonucleoprotein complex responsible for the synthesis of proteins in the cell. The small ribosomal subunit (SSU) binds messenger RNAs (mRNAs) and translates the encoded message by selecting cognate aminoacyl-transfer RNA (tRNA) molecules. The large subunit (LSU) contains the ribosomal catalytic site termed the peptidyl transferase center (PTC), which catalyzes the formation of peptide bonds, thereby polymerizing the amino acids delivered by tRNAs into a polypeptide chain. The nascent polypeptides leave the ribosome through a tunnel in the LSU and interact with protein factors that function in enzymatic processing, targeting, and the membrane insertion of nascent chains at the exit of the ribosomal tunnel. The sequence is that of Large ribosomal subunit protein uL2C (rpl803) from Schizosaccharomyces pombe (strain 972 / ATCC 24843) (Fission yeast).